We begin with the raw amino-acid sequence, 75 residues long: OcyC3 (75 aa).

Positions methionine 1 to alanine 22 are cleaved as a signal peptide. Residues glutamate 51–glutamine 75 constitute a propeptide that is removed on maturation.

In terms of tissue distribution, expressed by the venom gland.

It is found in the secreted. The protein localises to the target cell membrane. Amphipathic peptide with probable antimicrobial activity. May act by disrupting the integrity of the bacterial cell membrane. This Opisthacanthus cayaporum (South American scorpion) protein is OcyC3.